The following is a 350-amino-acid chain: 3-isopropylmalate dehydrogenase (350 aa).

71–84 (GPKWADAPRHLRPE) serves as a coordination point for NAD(+). Substrate is bound by residues arginine 91, arginine 101, arginine 129, and aspartate 220. Mg(2+)-binding residues include aspartate 220, aspartate 244, and aspartate 248. 279-291 (GSAPDIAGKGLAN) serves as a coordination point for NAD(+).

It belongs to the isocitrate and isopropylmalate dehydrogenases family. LeuB type 1 subfamily. Homodimer. The cofactor is Mg(2+). Mn(2+) serves as cofactor.

The protein resides in the cytoplasm. The enzyme catalyses (2R,3S)-3-isopropylmalate + NAD(+) = 4-methyl-2-oxopentanoate + CO2 + NADH. Its pathway is amino-acid biosynthesis; L-leucine biosynthesis; L-leucine from 3-methyl-2-oxobutanoate: step 3/4. Functionally, catalyzes the oxidation of 3-carboxy-2-hydroxy-4-methylpentanoate (3-isopropylmalate) to 3-carboxy-4-methyl-2-oxopentanoate. The product decarboxylates to 4-methyl-2 oxopentanoate. The polypeptide is 3-isopropylmalate dehydrogenase (Caulobacter vibrioides (strain ATCC 19089 / CIP 103742 / CB 15) (Caulobacter crescentus)).